Reading from the N-terminus, the 203-residue chain is Outer-membrane lipoprotein carrier protein (203 aa).

Positions 1–21 (MKKLIISCCLLATFSAAGAWA) are cleaved as a signal peptide. The disordered stretch occupies residues 174–203 (ALKSQQSGPISADKFKFRPPKGVTVDDQRQ).

Belongs to the LolA family. In terms of assembly, monomer.

It localises to the periplasm. Its function is as follows. Participates in the translocation of lipoproteins from the inner membrane to the outer membrane. Only forms a complex with a lipoprotein if the residue after the N-terminal Cys is not an aspartate (The Asp acts as a targeting signal to indicate that the lipoprotein should stay in the inner membrane). In Erwinia tasmaniensis (strain DSM 17950 / CFBP 7177 / CIP 109463 / NCPPB 4357 / Et1/99), this protein is Outer-membrane lipoprotein carrier protein.